The following is a 274-amino-acid chain: Diaminopimelate epimerase (274 aa).

Positions 11, 44, and 64 each coordinate substrate. Catalysis depends on cysteine 73, which acts as the Proton donor. Substrate contacts are provided by residues 74–75, asparagine 157, asparagine 190, and 208–209; these read GN and ER. Cysteine 217 (proton acceptor) is an active-site residue. A substrate-binding site is contributed by 218–219; it reads GS.

It belongs to the diaminopimelate epimerase family. As to quaternary structure, homodimer.

Its subcellular location is the cytoplasm. The catalysed reaction is (2S,6S)-2,6-diaminopimelate = meso-2,6-diaminopimelate. The protein operates within amino-acid biosynthesis; L-lysine biosynthesis via DAP pathway; DL-2,6-diaminopimelate from LL-2,6-diaminopimelate: step 1/1. Catalyzes the stereoinversion of LL-2,6-diaminopimelate (L,L-DAP) to meso-diaminopimelate (meso-DAP), a precursor of L-lysine and an essential component of the bacterial peptidoglycan. The sequence is that of Diaminopimelate epimerase from Edwardsiella ictaluri (strain 93-146).